Reading from the N-terminus, the 209-residue chain is Streptogramin A acetyltransferase (209 aa).

Histidine 82 is a catalytic residue.

It belongs to the transferase hexapeptide repeat family. In terms of assembly, homohexamer.

Inactivates the A compounds of streptogramin antibiotics by acetylation, thus providing resistance to these antibiotics. This chain is Streptogramin A acetyltransferase (vatD), found in Enterococcus faecium (Streptococcus faecium).